The following is an 82-amino-acid chain: Small ribosomal subunit protein uS17 (82 aa).

It belongs to the universal ribosomal protein uS17 family. Part of the 30S ribosomal subunit.

In terms of biological role, one of the primary rRNA binding proteins, it binds specifically to the 5'-end of 16S ribosomal RNA. The polypeptide is Small ribosomal subunit protein uS17 (Pelobacter propionicus (strain DSM 2379 / NBRC 103807 / OttBd1)).